The primary structure comprises 569 residues: MLPGLAAAAAAHRCSWSSLCRLRPRCRAAACNPSDCQEWQNLVTFGSFSNMVPCSHPYIGTLSQVKLYSTDVQKEGQGSQTLRVEKVPSFETAEGIGAELKAPLKQEPLQVRVKAVLKKREYGSKYTQNNFITGVRAINEFCLKSSDLEQLRKIRRRSPHEDTESFTVYLRSDVEAKSLEVWGSPEALAREKKLRKEAEIEYRERLFRNQKILREYRDFLGNTKPRSRTASVFFKGPGKVVMVAICINGLNCFFKFLAWIYTGSASMFSEAIHSLSDTCNQGLLALGISKSVQTPDPSHPYGFSNMRYISSLISGVGIFMMGAGLSWYHGVMGLLHPQPIESLLWAYCILAGSLVSEGATLLVAVNELRRNARAKGMSFYKYVMESRDPSTNVILLEDTAAVLGVIIAATCMGLTSITGNPLYDSLGSLGVGTLLGMVSAFLIYTNTEALLGRSIQPEQVQRLTELLENDPSVRAIHDVKATDLGLGKVRFKAEVDFDGRVVTRSYLEKQDFDQMLQEIQEVKTPEELETFMLKHGENIIDTLGAEVDRLEKELKKRNPEVRHVDLEIL.

The transit peptide at 1-68 (MLPGLAAAAA…IGTLSQVKLY (68 aa)) directs the protein to the mitochondrion. 5 consecutive transmembrane segments (helical) span residues 240 to 260 (VVMV…LAWI), 315 to 335 (GVGI…MGLL), 343 to 363 (LLWA…TLLV), 393 to 413 (VILL…TCMG), and 425 to 445 (SLGS…LIYT). The LXXLL motif signature appears at 463–467 (LTELL).

This sequence belongs to the cation diffusion facilitator (CDF) transporter (TC 2.A.4) family. SLC30A subfamily. Interacts with GRIP1, ESR1, AR and CTNNB1.

It is found in the mitochondrion membrane. Its subcellular location is the nucleus. The protein resides in the endoplasmic reticulum. It catalyses the reaction Zn(2+)(in) + 2 H(+)(out) = Zn(2+)(out) + 2 H(+)(in). In terms of biological role, mitochondrial proton-coupled zinc ion antiporter mediating the export of zinc from the mitochondria and involved in zinc homeostasis, zinc mobilization as well as mitochondrial morphology and health. In nucleus, functions as a secondary coactivator for nuclear receptors by cooperating with p160 coactivators subtypes. Plays a role in transcriptional activation of Wnt-responsive genes. The protein is Proton-coupled zinc antiporter SLC30A9, mitochondrial (SLC30A9) of Pongo abelii (Sumatran orangutan).